Here is a 147-residue protein sequence, read N- to C-terminus: Large ribosomal subunit protein uL13 (147 aa).

It belongs to the universal ribosomal protein uL13 family. In terms of assembly, part of the 50S ribosomal subunit.

In terms of biological role, this protein is one of the early assembly proteins of the 50S ribosomal subunit, although it is not seen to bind rRNA by itself. It is important during the early stages of 50S assembly. The sequence is that of Large ribosomal subunit protein uL13 from Lactobacillus johnsonii (strain CNCM I-12250 / La1 / NCC 533).